Consider the following 211-residue polypeptide: Small ribosomal subunit protein eS1 (211 aa).

It belongs to the eukaryotic ribosomal protein eS1 family.

This is Small ribosomal subunit protein eS1 from Archaeoglobus fulgidus (strain ATCC 49558 / DSM 4304 / JCM 9628 / NBRC 100126 / VC-16).